We begin with the raw amino-acid sequence, 445 residues long: tRNA modification GTPase MnmE (445 aa).

Positions 20, 79, and 119 each coordinate (6S)-5-formyl-5,6,7,8-tetrahydrofolate. The TrmE-type G domain maps to Gly-215–Glu-371. Asn-225 lines the K(+) pocket. GTP-binding positions include Asn-225–Ser-230, Ser-244–Thr-250, and Asp-269–Gly-272. Ser-229 contacts Mg(2+). The K(+) site is built by Ser-244, Ile-246, and Thr-249. Thr-250 provides a ligand contact to Mg(2+). Lys-445 provides a ligand contact to (6S)-5-formyl-5,6,7,8-tetrahydrofolate.

It belongs to the TRAFAC class TrmE-Era-EngA-EngB-Septin-like GTPase superfamily. TrmE GTPase family. As to quaternary structure, homodimer. Heterotetramer of two MnmE and two MnmG subunits. K(+) serves as cofactor.

The protein resides in the cytoplasm. Functionally, exhibits a very high intrinsic GTPase hydrolysis rate. Involved in the addition of a carboxymethylaminomethyl (cmnm) group at the wobble position (U34) of certain tRNAs, forming tRNA-cmnm(5)s(2)U34. In Rickettsia akari (strain Hartford), this protein is tRNA modification GTPase MnmE.